The chain runs to 199 residues: Transgelin-3 (199 aa).

A Calponin-homology (CH) domain is found at 24 to 136 (ADLENKLVDW…RTLMALGSVA (113 aa)). Phosphoserine is present on S163. The stretch at 174-199 (IGLQMGSNKGASQAGMTGYGMPRQIM) is one Calponin-like repeat. A compositionally biased stretch (polar residues) spans 178–188 (MGSNKGASQAG). Residues 178–199 (MGSNKGASQAGMTGYGMPRQIM) form a disordered region.

The protein belongs to the calponin family.

The protein is Transgelin-3 (Tagln3) of Mus musculus (Mouse).